Reading from the N-terminus, the 651-residue chain is A-type voltage-gated potassium channel KCND1 (651 aa).

The Cytoplasmic segment spans residues 1-183 (MAAGVATWLP…RAFENPHTST (183 aa)). The interval 2–20 (AAGVATWLPFARAAAVGWL) is interaction with KCNIP1, KCNIP2, and other family members. Zn(2+)-binding residues include His-104, Cys-131, and Cys-132. The segment at 144–164 (AERLAEDEEAEQAGEGPALPA) is disordered. The chain crosses the membrane as a helical span at residues 184-205 (AALVFYYVTGFFIAVSVIANVV). Over 206–230 (ETIPCRGTPRWPSKEQSCGDRFPTA) the chain is Extracellular. Residues 231 to 252 (FFCMDTACVLIFTGEYLLRLFA) form a helical membrane-spanning segment. Topologically, residues 253-263 (APSRCRFLRSV) are cytoplasmic. A helical membrane pass occupies residues 264 to 284 (MSLIDVVAILPYYIGLFVPKN). Residues 285 to 287 (DDV) are Extracellular-facing. Residues 288-308 (SGAFVTLRVFRVFRIFKFSRH) form a helical; Voltage-sensor membrane-spanning segment. Residues 309–323 (SQGLRILGYTLKSCA) lie on the Cytoplasmic side of the membrane. The segment at 310-323 (QGLRILGYTLKSCA) is S4-S5 linker. A helical transmembrane segment spans residues 324–345 (SELGFLLFSLTMAIIIFATVMF). Residues 346–359 (YAEKGTSKTNFTSI) lie on the Extracellular side of the membrane. Residue Asn-355 is glycosylated (N-linked (GlcNAc...) asparagine). An intramembrane region (helical) is located at residues 360–371 (PAAFWYTIVTMT). The Selectivity filter motif lies at 372-377 (TLGYGD). The stretch at 372–379 (TLGYGDMV) is an intramembrane region. Topologically, residues 380-386 (PSTIAGK) are extracellular. The chain crosses the membrane as a helical span at residues 387-415 (IFGSICSLSGVLVIALPVPVIVSNFSRIY). Residues 416 to 651 (HQNQRADKRR…LPETVKISSL (236 aa)) lie on the Cytoplasmic side of the membrane. Ser-458 bears the Phosphoserine mark. Residues 474–489 (FEQQHHHLLHCLEKTT) form a required for dendritic targeting region. Ser-555 is modified (phosphoserine). Disordered stretches follow at residues 566–585 (RRSP…HDSL) and 601–651 (IPTP…ISSL). A compositionally biased stretch (polar residues) spans 626–637 (TPNTTLRNSSLG).

This sequence belongs to the potassium channel family. D (Shal) (TC 1.A.1.2) subfamily. Kv4.1/KCND1 sub-subfamily. In terms of assembly, component of heteromultimeric potassium channels. Identified in potassium channel complexes containing KCND1, KCND2, KCND3, KCNIP1, KCNIP2, KCNIP3, KCNIP4, DPP6 and DPP10.

It localises to the cell membrane. The catalysed reaction is K(+)(in) = K(+)(out). A-type voltage-gated potassium channel that mediates transmembrane potassium transport in excitable membranes in the brain. Mediates A-type current I(SA) in suprachiasmatic nucleus (SCN) neurons. Exhibits a low-threshold A-type current with a hyperpolarized steady-state inactivation midpoint and the recovery process was steeply voltage-dependent, with recovery being markedly faster at more negative potentials. May regulates repetitive firing rates in the suprachiasmatic nucleus (SCN) neurons and circadian rhythms in neuronal excitability and behavior. Contributes to the regulation of the circadian rhythm of action potential firing in suprachiasmatic nucleus neurons, which regulates the circadian rhythm of locomotor activity. The regulatory subunit KCNIP1 modulates the kinetics of channel inactivation, increases the current amplitudes and accelerates recovery from inactivation, shifts activation in a depolarizing direction. The regulatory subunit DPP10 decreases the voltage sensitivity of the inactivation channel gating. The polypeptide is A-type voltage-gated potassium channel KCND1 (Mus musculus (Mouse)).